The primary structure comprises 125 residues: Apoptosis inhibitor Rv3655c (125 aa).

A signal peptide spans 1-33 (MEAALAIATLVLVLVLCLAGVTAVSMQVRCIDA).

Interacts with human E3 ubiquitin-protein ligase RNF213.

It is found in the secreted. Its subcellular location is the host cytoplasm. Its function is as follows. Effector protein that participates in the suppression of macrophage apoptosis by blocking the extrinsic pathway. Interferes with caspase-8 activation and binds to the host E3 ubiquitin-protein ligase RNF213, whose fusion partners have anti-apoptotic function. This is Apoptosis inhibitor Rv3655c from Mycobacterium tuberculosis (strain ATCC 25618 / H37Rv).